The primary structure comprises 347 residues: Tetraacyldisaccharide 4'-kinase (347 aa).

64 to 71 lines the ATP pocket; that stretch reads YVGGTGKT.

The protein belongs to the LpxK family.

It carries out the reaction a lipid A disaccharide + ATP = a lipid IVA + ADP + H(+). It participates in glycolipid biosynthesis; lipid IV(A) biosynthesis; lipid IV(A) from (3R)-3-hydroxytetradecanoyl-[acyl-carrier-protein] and UDP-N-acetyl-alpha-D-glucosamine: step 6/6. Functionally, transfers the gamma-phosphate of ATP to the 4'-position of a tetraacyldisaccharide 1-phosphate intermediate (termed DS-1-P) to form tetraacyldisaccharide 1,4'-bis-phosphate (lipid IVA). The polypeptide is Tetraacyldisaccharide 4'-kinase (Bordetella bronchiseptica (strain ATCC BAA-588 / NCTC 13252 / RB50) (Alcaligenes bronchisepticus)).